Here is a 756-residue protein sequence, read N- to C-terminus: Phosphoinositide 3-kinase regulatory subunit 6 (756 aa).

2 disordered regions span residues 570 to 589 (SKSPKEGSSPRRRGAAEGTG) and 716 to 738 (CSRTQKSKTSALNSHGQETEKNM). The segment covering 717–731 (SRTQKSKTSALNSHG) has biased composition (polar residues).

In terms of assembly, heterodimer of a catalytic subunit (PIK3CG) and a regulatory (PIK3R6) subunit. The binding of PIK3R6 to PIK3CG may exclude the binding of PIK3R5 to PIK3CG. Interacts with beta-gamma G protein dimers. Interacts with PDE3B and RAPGEF3; form a signaling complex that regulates phosphatidylinositol 3-kinase gamma in angiogenesis. Highly expressed in heart. In a lower extent, also expressed in brain, spleen, lung, liver, kidney, prostate, thyroid, salivary gland, dendritic cells, macrophages and neutrophils.

It is found in the cytoplasm. Its subcellular location is the cell membrane. Regulatory subunit of the PI3K gamma complex. Acts as an adapter to drive activation of PIK3CG by beta-gamma G protein dimers. The PIK3CG:PIK3R6 heterodimer is much less sensitive to beta-gamma G proteins than PIK3CG:PIK3R5 and its membrane recruitment and beta-gamma G protein dimer-dependent activation requires HRAS bound to PIK3CG. Recruits of the PI3K gamma complex to a PDE3B:RAPGEF3 signaling complex involved in angiogenesis; signaling seems to involve RRAS. This chain is Phosphoinositide 3-kinase regulatory subunit 6 (Pik3r6), found in Mus musculus (Mouse).